The chain runs to 161 residues: MPLKLAVYPGSFDPVTYGHLDIIDRGLKIFDGVIVAVARNSEKNALFTVQERIELLTEILKDRPEARVETFDGLLVDYVRRVGASVVIRGLRAVSDFEFEFQLAQMNRNITRDVETLFMMTSVPYSYLSSSIVKEVSCLNGPVDKLVPPLVKSALDAKFRG.

S11 provides a ligand contact to substrate. ATP-binding positions include S11 to F12 and H19. Substrate contacts are provided by K43, L75, and R89. ATP is bound by residues G90 to R92, E100, and Y125 to S131.

The protein belongs to the bacterial CoaD family. In terms of assembly, homohexamer. Mg(2+) serves as cofactor.

The protein resides in the cytoplasm. The enzyme catalyses (R)-4'-phosphopantetheine + ATP + H(+) = 3'-dephospho-CoA + diphosphate. Its pathway is cofactor biosynthesis; coenzyme A biosynthesis; CoA from (R)-pantothenate: step 4/5. Functionally, reversibly transfers an adenylyl group from ATP to 4'-phosphopantetheine, yielding dephospho-CoA (dPCoA) and pyrophosphate. In Citrifermentans bemidjiense (strain ATCC BAA-1014 / DSM 16622 / JCM 12645 / Bem) (Geobacter bemidjiensis), this protein is Phosphopantetheine adenylyltransferase.